We begin with the raw amino-acid sequence, 211 residues long: Thymidylate kinase (211 aa).

10-17 (GVEGCGKT) lines the ATP pocket.

Belongs to the thymidylate kinase family.

It catalyses the reaction dTMP + ATP = dTDP + ADP. Its function is as follows. Phosphorylation of dTMP to form dTDP in both de novo and salvage pathways of dTTP synthesis. The polypeptide is Thymidylate kinase (Trichormus variabilis (strain ATCC 29413 / PCC 7937) (Anabaena variabilis)).